We begin with the raw amino-acid sequence, 142 residues long: Metallothiol transferase FosB (142 aa).

A VOC domain is found at 5-120 (SVNHICFSVS…DGHKIELHTG (116 aa)). Mg(2+) contacts are provided by H8, H67, and E116. The active-site Proton donor/acceptor is E116.

The protein belongs to the fosfomycin resistance protein family. FosB subfamily. As to quaternary structure, homodimer. Requires Mg(2+) as cofactor.

It localises to the cytoplasm. In terms of biological role, metallothiol transferase which confers resistance to fosfomycin by catalyzing the addition of a thiol cofactor to fosfomycin. L-cysteine is probably the physiological thiol donor. This is Metallothiol transferase FosB from Staphylococcus epidermidis (strain ATCC 12228 / FDA PCI 1200).